Reading from the N-terminus, the 1281-residue chain is Zinc finger transcription factor Trps1 (1281 aa).

2 disordered regions span residues 1–101 and 116–204; these read MVRK…VSFP and PAAG…KGDL. Polar residues-rich tracts occupy residues 21 to 31 and 40 to 49; these read LEPTATESKVS and DQMSENTDQS. A Glycyl lysine isopeptide (Lys-Gly) (interchain with G-Cter in SUMO2) cross-link involves residue Lys29. A phosphoserine mark is found at Ser90 and Ser127. The segment covering 148-162 has biased composition (basic and acidic residues); that stretch reads LETKEEHKMSPKATE. A compositionally biased stretch (polar residues) spans 166–189; the sequence is PVQSGQANCQGLSPVSVASKNPQV. Phosphoserine is present on residues Ser178 and Ser216. The C2H2-type 1; atypical zinc-finger motif lies at 222–247; it reads FKCNICGYGYYGNDPTDLIKHFRKYH. Lys263 participates in a covalent cross-link: Glycyl lysine isopeptide (Lys-Gly) (interchain with G-Cter in SUMO2). Residues 333-358 form a C2H2-type 2; atypical zinc finger; the sequence is FRCKFCNFTYMGNSSTELEQHFLQTH. The tract at residues 365–393 is disordered; sequence SLPSSEGVKPSEKNSNKSIPALRASDSGD. Residues Lys418, Lys457, Lys474, and Lys488 each participate in a glycyl lysine isopeptide (Lys-Gly) (interchain with G-Cter in SUMO2) cross-link. Residues 484 to 515 are disordered; that stretch reads NDLAKSVEGEPLTKPEKGLSGAKKKDFPSKGA. A compositionally biased stretch (basic and acidic residues) spans 488 to 515; the sequence is KSVEGEPLTKPEKGLSGAKKKDFPSKGA. The C2H2-type 3; atypical zinc finger occupies 614–637; that stretch reads HQCHQCSFSTPDVDVLLFHYETVH. The tract at residues 635 to 819 is mediates interaction with GLI3; it reads TVHESQASDV…SLGLLTPVSS (185 aa). A Glycyl lysine isopeptide (Lys-Gly) (interchain with G-Cter in SUMO2) cross-link involves residue Lys645. 2 consecutive C2H2-type zinc fingers follow at residues 666–689 and 692–715; these read HSCT…RRAH and YKCR…NTVH. Glycyl lysine isopeptide (Lys-Gly) (interchain with G-Cter in SUMO2) cross-links involve residues Lys737 and Lys755. Lys766 participates in a covalent cross-link: Glycyl lysine isopeptide (Lys-Gly) (interchain with G-Cter in SUMO1); alternate. Residue Lys766 forms a Glycyl lysine isopeptide (Lys-Gly) (interchain with G-Cter in SUMO2); alternate linkage. Glycyl lysine isopeptide (Lys-Gly) (interchain with G-Cter in SUMO2) cross-links involve residues Lys825 and Lys850. Residues 856–885 are disordered; it reads APAGSEKSASLTQQYPASGESKTKDESQSL. Over residues 862–871 the composition is skewed to polar residues; that stretch reads KSASLTQQYP. Residues Lys877 and Lys879 each participate in a glycyl lysine isopeptide (Lys-Gly) (interchain with G-Cter in SUMO2) cross-link. The segment at 896–920 adopts a GATA-type zinc-finger fold; the sequence is CANCLTTKTSLWRKNANGGYVCNAC. Glycyl lysine isopeptide (Lys-Gly) (interchain with G-Cter in SUMO2) cross-links involve residues Lys925, Lys937, and Lys965. Over residues 961–977 the composition is skewed to polar residues; that stretch reads EQLNKQQRGSGEEQVNG. Positions 961-1000 are disordered; that stretch reads EQLNKQQRGSGEEQVNGSPLERRSEDHLSESHPREIPLPS. Position 978 is a phosphoserine (Ser978). The span at 980-995 shows a compositional bias: basic and acidic residues; that stretch reads LERRSEDHLSESHPRE. Residues 985–1184 form a mediates interaction with RNF4 region; sequence EDHLSESHPR…PTANGASKEK (200 aa). Residues Lys1003, Lys1012, Lys1030, and Lys1040 each participate in a glycyl lysine isopeptide (Lys-Gly) (interchain with G-Cter in SUMO2) cross-link. The span at 1040–1049 shows a compositional bias: polar residues; that stretch reads KSPQESTGDP. Residues 1040 to 1078 are disordered; the sequence is KSPQESTGDPGNSSSVSDGKGSSERGSPIEKYMRPAKHP. Ser1041 carries the post-translational modification Phosphoserine. Over residues 1050–1059 the composition is skewed to low complexity; the sequence is GNSSSVSDGK. Basic and acidic residues predominate over residues 1060–1072; that stretch reads GSSERGSPIEKYM. Position 1066 is a phosphoserine (Ser1066). A Glycyl lysine isopeptide (Lys-Gly) (interchain with G-Cter in SUMO2) cross-link involves residue Lys1070. Residue Ser1085 is modified to Phosphoserine. Residues 1163 to 1281 are transcriptional repressor domain; sequence PLDLAIKHSR…QAEKNGKPKE (119 aa). Residues 1169 to 1195 form a disordered region; that stretch reads KHSRPGPTANGASKEKTKAPPTVKNED. Glycyl lysine isopeptide (Lys-Gly) (interchain with G-Cter in SUMO2); alternate cross-links involve residues Lys1192 and Lys1201. Residues Lys1192 and Lys1201 each participate in a glycyl lysine isopeptide (Lys-Gly) (interchain with G-Cter in SUMO); alternate cross-link. Lys1201 participates in a covalent cross-link: Glycyl lysine isopeptide (Lys-Gly) (interchain with G-Cter in SUMO1); alternate. 2 C2H2-type zinc fingers span residues 1215-1237 and 1243-1267; these read TKCV…MSCH and FQCS…RGLH.

Interacts with RNF4; regulates TRPS1 repressor activity. Interacts specifically with the activator form of GLI3 (GLI3A) but not with the repressor form (GLI3R). Sumoylated. Sumoylation in the repressor domain inhibits the transcription repression activity. Sumoylation on Lys-1201 is the major site. Appears to be sumoylated on multiple sites. As to expression, in the embryo, expression is detected in both visceral and skeletal tissues. Found in the maxilla, mandible, snout, prospective phalanges and in the femoral head within the developing hip. Also expressed in the hair follicles.

The protein resides in the nucleus. In terms of biological role, transcriptional repressor. Binds specifically to GATA sequences and represses expression of GATA-regulated genes at selected sites and stages in vertebrate development. Regulates chondrocyte proliferation and differentiation. Executes multiple functions in proliferating chondrocytes, expanding the region of distal chondrocytes, activating proliferation in columnar cells and supporting the differentiation of columnar into hypertrophic chondrocytes. The sequence is that of Zinc finger transcription factor Trps1 (Trps1) from Mus musculus (Mouse).